We begin with the raw amino-acid sequence, 176 residues long: NAD(P)H-quinone oxidoreductase subunit J (176 aa).

The protein belongs to the complex I 30 kDa subunit family. In terms of assembly, NDH-1 can be composed of about 15 different subunits; different subcomplexes with different compositions have been identified which probably have different functions.

Its subcellular location is the cellular thylakoid membrane. The enzyme catalyses a plastoquinone + NADH + (n+1) H(+)(in) = a plastoquinol + NAD(+) + n H(+)(out). It catalyses the reaction a plastoquinone + NADPH + (n+1) H(+)(in) = a plastoquinol + NADP(+) + n H(+)(out). Functionally, NDH-1 shuttles electrons from an unknown electron donor, via FMN and iron-sulfur (Fe-S) centers, to quinones in the respiratory and/or the photosynthetic chain. The immediate electron acceptor for the enzyme in this species is believed to be plastoquinone. Couples the redox reaction to proton translocation, and thus conserves the redox energy in a proton gradient. Cyanobacterial NDH-1 also plays a role in inorganic carbon-concentration. This is NAD(P)H-quinone oxidoreductase subunit J from Nostoc punctiforme (strain ATCC 29133 / PCC 73102).